A 910-amino-acid polypeptide reads, in one-letter code: Auxilin (910 aa).

3 tandem repeats follow at residues 33–36 (NLKD), 37–40 (NLKD), and 41–44 (TLKD). Positions 33–44 (NLKDNLKDTLKD) are 3 X 4 AA approximate tandem repeats. Residues 52 to 219 (SVTSYTKGDL…GYMCDLLADK (168 aa)) form the Phosphatase tensin-type domain. Residue Ser109 is modified to Phosphoserine. The Phosphocysteine intermediate role is filled by Cys161. In terms of domain architecture, C2 tensin-type spans 225–363 (FKPLTIKSIT…FQVTLDVELQ (139 aa)). The SH3-binding motif lies at 406–414 (PIDIPPDNP). The segment at 448–772 (QESEQSDDEL…RGKAAANLEG (325 aa)) is disordered. Residues Ser450, Ser453, Ser560, and Ser567 each carry the phosphoserine modification. Residues 547 to 569 (PSGPTSTQSTPRRSATSTSASPT) show a composition bias toward low complexity. Over residues 596–626 (FLNTASASSDPFLQPTRSPSPTVHASSTPAV) the composition is skewed to polar residues. A compositionally biased stretch (low complexity) spans 651–666 (SAATSPTGSSHGTPTH). Positions 715 to 725 (MGGGWQQGGGY) are enriched in gly residues. Residues 732–758 (SKPQSSMPHSSPQNRPNYNVSFSSMPG) show a composition bias toward polar residues. Residues 846 to 910 (TKWKPVGMAD…FENQGQKPLY (65 aa)) form the J domain.

In terms of assembly, forms a complex composed of HSPA8, CLTC and DNAJC6. Interacts with HSPA8/HSC70 in an ATP-dependent manner; this interaction stimulates the HSPA8's ATPase activity. Interacts with CLTC; this interaction produces a local change in heavy-chain contacts, creating a detectable global distortion of the clathrin coat. Interacts with AP2A2. Interacts with DNM1(GTP-bound form); this interaction allows clathrin-coated vesicle (CCV) formation at the plasma membrane. In terms of processing, the N-terminus is blocked. Post-translationally, phosphorylation at Ser-567 modulates its ability to bind CLTC and therefore the synaptic vesicle endocytosis (SVE). In terms of tissue distribution, brain.

It localises to the cytoplasmic vesicle. The protein resides in the clathrin-coated vesicle. Its function is as follows. May act as a protein phosphatase and/or a lipid phosphatase. Co-chaperone that recruits HSPA8/HSC70 to clathrin-coated vesicles (CCVs) and promotes the ATP-dependent dissociation of clathrin from CCVs and participates in clathrin-mediated endocytosis of synaptic vesicles and their recycling and also in intracellular trafficking. Firstly, binds tightly to the clathrin cages, at a ratio of one DNAJC6 per clathrin triskelion. The HSPA8:ATP complex then binds to the clathrin-auxilin cage, initially at a ratio of one HSPA8 per triskelion leading to ATP hydrolysis stimulation and causing a conformational change in the HSPA8. This cycle is repeated three times to drive to a complex containing the clathrin-auxilin cage associated to three HSPA8:ADP complex. The ATP hydrolysis of the third HSPA8:ATP complex leads to a concerted dismantling of the cage into component triskelia. Then, dissociates from the released triskelia and be recycled to initiate another cycle of HSPA8's recruitment. Also acts during the early steps of clathrin-coated vesicle (CCV) formation through its interaction with the GTP bound form of DNM1. The protein is Auxilin of Bos taurus (Bovine).